The following is a 324-amino-acid chain: MAEPIIVKGQKQNAMGVKRKGAEKVRHVAADAEHFEQERLKKPSWIRAKMPTGPEVMRMKAMMREQKLHSVCEEASCPNLGECFRFGTASFMIMGDICTRRCPFCDVAHGRPRPLNPFEPRNLAQTVYNLGLAHVVITSVDRDDLRDGGAAHFAACIREIRRVSPKMTIEILTPDFRGRAELAVQILSATPPDVFNHNLETIPRFYDVVRPGANYERSLHLLRDYKKACPKKIITKSGLMVGLGEEIEEILQVMQDLRSHDVDMLTVGQYLQPSVHHLPVKRYYTPEEFDFLAQEGKKMGFLHVASGAMVRSSYHADRSAQTVL.

Residues C72, C77, C83, C98, C102, C105, and S313 each coordinate [4Fe-4S] cluster. The Radical SAM core domain occupies 84 to 302; it reads FRFGTASFMI…AQEGKKMGFL (219 aa).

Belongs to the radical SAM superfamily. Lipoyl synthase family. Requires [4Fe-4S] cluster as cofactor.

It localises to the cytoplasm. It carries out the reaction [[Fe-S] cluster scaffold protein carrying a second [4Fe-4S](2+) cluster] + N(6)-octanoyl-L-lysyl-[protein] + 2 oxidized [2Fe-2S]-[ferredoxin] + 2 S-adenosyl-L-methionine + 4 H(+) = [[Fe-S] cluster scaffold protein] + N(6)-[(R)-dihydrolipoyl]-L-lysyl-[protein] + 4 Fe(3+) + 2 hydrogen sulfide + 2 5'-deoxyadenosine + 2 L-methionine + 2 reduced [2Fe-2S]-[ferredoxin]. Its pathway is protein modification; protein lipoylation via endogenous pathway; protein N(6)-(lipoyl)lysine from octanoyl-[acyl-carrier-protein]: step 2/2. Functionally, catalyzes the radical-mediated insertion of two sulfur atoms into the C-6 and C-8 positions of the octanoyl moiety bound to the lipoyl domains of lipoate-dependent enzymes, thereby converting the octanoylated domains into lipoylated derivatives. In Dichelobacter nodosus (strain VCS1703A), this protein is Lipoyl synthase.